The following is a 338-amino-acid chain: Acetylcholinesterase (338 aa).

N-linked (GlcNAc...) asparagine glycosylation occurs at N8. S99 serves as the catalytic Acyl-ester intermediate. A disulfide bridge connects residues C153 and C164. The Charge relay system role is filled by E226.

This sequence belongs to the type-B carboxylesterase/lipase family.

Its subcellular location is the synapse. It is found in the secreted. The protein resides in the cell membrane. The enzyme catalyses acetylcholine + H2O = choline + acetate + H(+). Functionally, terminates signal transduction at the neuromuscular junction by rapid hydrolysis of the acetylcholine released into the synaptic cleft. This is Acetylcholinesterase (ache) from Myxine glutinosa (Atlantic hagfish).